The following is a 211-amino-acid chain: Nucleoside diphosphate kinase homolog 5 (211 aa).

The tract at residues 13-145 (EKTLALIKPD…EREIRFMFPA (133 aa)) is NDK.

It belongs to the NDK family. Component of the axonemal radial spoke complex 1 (RS1), at least composed of spoke head proteins RSPH1, RSPH3, RSPH9 and the cilia-specific component RSPH4A or sperm-specific component RSPH6A, spoke stalk proteins RSPH14, DNAJB13, DYDC1, ROPN1L and NME5, and the anchor protein IQUB. Interacts with IQUB. As to expression, expressed in the trachea, ependymal cells and oviduct (at protein level). Expressed predominantly in germ cells of the testis. Not expressed in testicular somatic cells.

The protein resides in the cell projection. It is found in the cilium. The protein localises to the cytoplasm. It localises to the cytoskeleton. Its subcellular location is the flagellum axoneme. Its function is as follows. Functions as part of axonemal radial spoke complexes that play an important part in the motility of sperm and cilia. Does not seem to have nucleoside diphosphate kinase (NDPK) activity. Confers protection from cell death by BAX and alters the cellular levels of several antioxidant enzymes including GPX5. May play a role in spermiogenesis by increasing the ability of late-stage spermatids to eliminate reactive oxygen species. In Mus musculus (Mouse), this protein is Nucleoside diphosphate kinase homolog 5 (Nme5).